We begin with the raw amino-acid sequence, 218 residues long: MLQSTARTASKLVQPVAGVLAVRSKHTLPDLPFDYADLEPVISHEIMQLHHQKHHATYVNNLNQIEEKLHEAVSKGNLKEAIALQPALKFNGGGHINHSIFWTNLAKDGGEPSKELMDTIKRDFGSLDNLQKRLSDITIAVQGSGWGWLGYCKKDKILKIATCANQDPLEGMVPLFGIDVWEHAYYLQYKNVRPDYVHAIWKIANWKNISERFANARQ.

A mitochondrion-targeting transit peptide spans 1-24 (MLQSTARTASKLVQPVAGVLAVRS). The Mn(2+) site is built by H50, H98, D179, and H183.

It belongs to the iron/manganese superoxide dismutase family. In terms of assembly, homotetramer. Requires Mn(2+) as cofactor. In terms of tissue distribution, expressed in pharynx and rectum. Upon thermal stress, expressed in vulva, body wall muscles and hypodermis.

The protein resides in the mitochondrion. The catalysed reaction is 2 superoxide + 2 H(+) = H2O2 + O2. Destroys superoxide anion radicals which are normally produced within the cells and which are toxic to biological systems. This Caenorhabditis elegans protein is Superoxide dismutase [Mn] 2, mitochondrial (sod-3).